The primary structure comprises 452 residues: Tissue alpha-L-fucosidase (452 aa).

The first 17 residues, 1–17, serve as a signal peptide directing secretion; that stretch reads MLLLLLLLLVAAAQAVA. Asn-227, Asn-254, Asn-368, and Asn-378 each carry an N-linked (GlcNAc...) asparagine glycan.

Belongs to the glycosyl hydrolase 29 family. Homotetramer.

The protein localises to the lysosome. The catalysed reaction is an alpha-L-fucoside + H2O = L-fucose + an alcohol. The enzyme catalyses a neolactoside IV(2)-alpha-Fuc-nLc4Cer(d18:1(4E)) + H2O = a neolactoside nLc4Cer(d18:1(4E)) + L-fucose. It carries out the reaction a neolactoside IV(2)-alpha-Fuc-nLc4Cer(d18:0) + H2O = a neolactoside nLc4Cer(d18:0) + L-fucose. In terms of biological role, alpha-L-fucosidase is responsible for hydrolyzing the alpha-1,6-linked fucose joined to the reducing-end N-acetylglucosamine of the carbohydrate moieties of glycoproteins. The polypeptide is Tissue alpha-L-fucosidase (Fuca1) (Mus musculus (Mouse)).